Consider the following 2430-residue polypeptide: Spatacsin (2430 aa).

Residues serine 1942 and serine 1943 each carry the phosphoserine modification.

In terms of assembly, interacts with AP5Z1, AP5B1, AP5S1 and ZFYVE26. Ubiquitously expressed at low level. Expressed in embryonic and adult cortical projection neurons.

It is found in the cytoplasm. The protein localises to the cytosol. It localises to the nucleus. The protein resides in the cell projection. Its subcellular location is the axon. It is found in the dendrite. The protein localises to the synapse. May play a role in neurite plasticity by maintaining cytoskeleton stability and regulating synaptic vesicle transport. In Mus musculus (Mouse), this protein is Spatacsin (Spg11).